Reading from the N-terminus, the 122-residue chain is Large ribosomal subunit protein uL14 (122 aa).

This sequence belongs to the universal ribosomal protein uL14 family. As to quaternary structure, part of the 50S ribosomal subunit. Forms a cluster with proteins L3 and L19. In the 70S ribosome, L14 and L19 interact and together make contacts with the 16S rRNA in bridges B5 and B8.

In terms of biological role, binds to 23S rRNA. Forms part of two intersubunit bridges in the 70S ribosome. The polypeptide is Large ribosomal subunit protein uL14 (Lactobacillus gasseri (strain ATCC 33323 / DSM 20243 / BCRC 14619 / CIP 102991 / JCM 1131 / KCTC 3163 / NCIMB 11718 / NCTC 13722 / AM63)).